A 189-amino-acid chain; its full sequence is Threonylcarbamoyl-AMP synthase (189 aa).

The 184-residue stretch at 6-189 (SPAFESVLTA…ALTGELYRQG (184 aa)) folds into the YrdC-like domain.

It belongs to the SUA5 family. TsaC subfamily.

Its subcellular location is the cytoplasm. It carries out the reaction L-threonine + hydrogencarbonate + ATP = L-threonylcarbamoyladenylate + diphosphate + H2O. Required for the formation of a threonylcarbamoyl group on adenosine at position 37 (t(6)A37) in tRNAs that read codons beginning with adenine. Catalyzes the conversion of L-threonine, HCO(3)(-)/CO(2) and ATP to give threonylcarbamoyl-AMP (TC-AMP) as the acyladenylate intermediate, with the release of diphosphate. The sequence is that of Threonylcarbamoyl-AMP synthase from Photorhabdus laumondii subsp. laumondii (strain DSM 15139 / CIP 105565 / TT01) (Photorhabdus luminescens subsp. laumondii).